The chain runs to 313 residues: 3'-5' exoribonuclease YhaM (313 aa).

Positions 163-279 (HVVSMLRLAK…LHQIDLMDAS (117 aa)) constitute an HD domain.

The protein belongs to the YhaM family.

Shows a 3'-5' exoribonuclease activity. This is 3'-5' exoribonuclease YhaM from Listeria welshimeri serovar 6b (strain ATCC 35897 / DSM 20650 / CCUG 15529 / CIP 8149 / NCTC 11857 / SLCC 5334 / V8).